The chain runs to 347 residues: WAT1-related protein At4g15540 (347 aa).

Transmembrane regions (helical) follow at residues 15 to 35, 47 to 67, 73 to 93, 108 to 128, 139 to 159, 178 to 198, 210 to 230, 243 to 263, 276 to 296, and 299 to 319; these read VVPF…SILY, VFVF…SLIF, LPTA…LGLT, TLSS…AIFF, ATQA…VIVL, WIIG…WFIL, IAVV…VCLL, GFSL…GSVI, ISLF…IFLG, and LHLG…TVIW. Residues 30-158 enclose the EamA 1 domain; it reads GSSILYKAAT…VSISGALVIV (129 aa). The region spanning 216–317 is the EamA 2 domain; it reads YNLCATLISG…VILSFGFYTV (102 aa).

The protein belongs to the drug/metabolite transporter (DMT) superfamily. Plant drug/metabolite exporter (P-DME) (TC 2.A.7.4) family.

It localises to the membrane. This is WAT1-related protein At4g15540 from Arabidopsis thaliana (Mouse-ear cress).